A 91-amino-acid polypeptide reads, in one-letter code: Probable Fe(2+)-trafficking protein (91 aa).

It belongs to the Fe(2+)-trafficking protein family.

In terms of biological role, could be a mediator in iron transactions between iron acquisition and iron-requiring processes, such as synthesis and/or repair of Fe-S clusters in biosynthetic enzymes. This Cupriavidus metallidurans (strain ATCC 43123 / DSM 2839 / NBRC 102507 / CH34) (Ralstonia metallidurans) protein is Probable Fe(2+)-trafficking protein.